The following is a 1493-amino-acid chain: Pleckstrin homology domain-containing family H member 2 (1493 aa).

Residues 20 to 175 adopt a coiled-coil conformation; it reads LESQLMKFRV…LQEVQGKKSS (156 aa). Disordered stretches follow at residues 202 to 230, 245 to 335, 363 to 439, and 613 to 705; these read SPPQ…DMEE, NNRG…SSSI, LNSP…LPPP, and SSSP…EPLE. Residues 208 to 230 show a composition bias toward basic and acidic residues; the sequence is KSEEMSKISSKEPEFTEGKDMEE. Polar residues-rich tracts occupy residues 245-260 and 267-281; these read NNRG…CGSE and TSFA…NSGA. The segment covering 374–388 has biased composition (basic and acidic residues); that stretch reads LSKKEQDSSSDELNK. Polar residues-rich tracts occupy residues 389-409, 421-432, and 676-698; these read KFQS…TPSP, NSLSGKGTQLVP, and STDT…SSDN. 2 PH domains span residues 703–797 and 811–919; these read PLEK…NVLR and KPTM…VAAG. The MyTH4 domain maps to 955–1110; it reads HSKEGIISPL…PSRMEILSTL (156 aa). The 331-residue stretch at 1121–1451 folds into the FERM domain; that stretch reads FSIPVHFMNG…SYINNFHQQK (331 aa). The tract at residues 1474-1493 is disordered; the sequence is MMGSQPLLSSSRPTKGPTLL.

As to quaternary structure, self-associates. Interacts with TGFB1I1. As to expression, kidney. Reduced expression in patients with focal segmental glomerulosclerosis.

The protein localises to the cytoplasm. It localises to the cytoskeleton. The protein resides in the cell membrane. It is found in the cell projection. Its subcellular location is the lamellipodium. In terms of biological role, in the kidney glomerulus may play a role in linking podocyte foot processes to the glomerular basement membrane. May be involved in stabilization of F-actin by attenuating its depolymerization. Can recruit TGFB1I1 from focal adhesions to podocyte lamellipodia. This Homo sapiens (Human) protein is Pleckstrin homology domain-containing family H member 2 (PLEKHH2).